Consider the following 309-residue polypeptide: Oxygen-dependent coproporphyrinogen-III oxidase (309 aa).

S100 contributes to the substrate binding site. Positions 104 and 114 each coordinate a divalent metal cation. H114 (proton donor) is an active-site residue. 116 to 118 (NVR) is a binding site for substrate. Residues H153 and H183 each contribute to the a divalent metal cation site. The tract at residues 248-283 (YAEFNLVYDRGTLFGLQSGGRTESILMSLPPIVHWE) is important for dimerization. 266-268 (GGR) is a substrate binding site.

This sequence belongs to the aerobic coproporphyrinogen-III oxidase family. As to quaternary structure, homodimer. A divalent metal cation is required as a cofactor.

It is found in the cytoplasm. It carries out the reaction coproporphyrinogen III + O2 + 2 H(+) = protoporphyrinogen IX + 2 CO2 + 2 H2O. The protein operates within porphyrin-containing compound metabolism; protoporphyrin-IX biosynthesis; protoporphyrinogen-IX from coproporphyrinogen-III (O2 route): step 1/1. Involved in the heme biosynthesis. Catalyzes the aerobic oxidative decarboxylation of propionate groups of rings A and B of coproporphyrinogen-III to yield the vinyl groups in protoporphyrinogen-IX. This Legionella pneumophila (strain Lens) protein is Oxygen-dependent coproporphyrinogen-III oxidase.